Reading from the N-terminus, the 305-residue chain is ATP synthase gamma chain (305 aa).

It belongs to the ATPase gamma chain family. As to quaternary structure, F-type ATPases have 2 components, CF(1) - the catalytic core - and CF(0) - the membrane proton channel. CF(1) has five subunits: alpha(3), beta(3), gamma(1), delta(1), epsilon(1). CF(0) has three main subunits: a, b and c.

The protein localises to the cell membrane. Its function is as follows. Produces ATP from ADP in the presence of a proton gradient across the membrane. The gamma chain is believed to be important in regulating ATPase activity and the flow of protons through the CF(0) complex. This is ATP synthase gamma chain from Mycobacterium tuberculosis (strain ATCC 25177 / H37Ra).